The primary structure comprises 271 residues: Type III pantothenate kinase (271 aa).

6-13 contacts ATP; the sequence is DVRNTHTV. 109–112 provides a ligand contact to substrate; the sequence is GADR. Residue Asp-111 is the Proton acceptor of the active site. Position 131 (Asp-131) interacts with K(+). Ser-134 is a binding site for ATP. Residue Thr-186 coordinates substrate.

The protein belongs to the type III pantothenate kinase family. As to quaternary structure, homodimer. NH4(+) is required as a cofactor. It depends on K(+) as a cofactor.

It localises to the cytoplasm. It carries out the reaction (R)-pantothenate + ATP = (R)-4'-phosphopantothenate + ADP + H(+). It functions in the pathway cofactor biosynthesis; coenzyme A biosynthesis; CoA from (R)-pantothenate: step 1/5. Its function is as follows. Catalyzes the phosphorylation of pantothenate (Pan), the first step in CoA biosynthesis. This is Type III pantothenate kinase from Mycolicibacterium smegmatis (strain ATCC 700084 / mc(2)155) (Mycobacterium smegmatis).